An 842-amino-acid polypeptide reads, in one-letter code: Outer membrane usher protein AggC (842 aa).

The N-terminal stretch at 1–21 (MKTSSFIIVILLCFRIENVIA) is a signal peptide. Cysteines 819 and 841 form a disulfide.

Belongs to the fimbrial export usher family.

It localises to the cell outer membrane. In terms of biological role, involved in the export and assembly of the AAF/I fimbriae subunits across the outer membrane. This is Outer membrane usher protein AggC (aggC) from Escherichia coli.